An 88-amino-acid polypeptide reads, in one-letter code: Exodeoxyribonuclease 7 small subunit (88 aa).

Positions 69 to 88 (ALAEEADPEDGASGADGGGA) are disordered.

Belongs to the XseB family. In terms of assembly, heterooligomer composed of large and small subunits.

It is found in the cytoplasm. It carries out the reaction Exonucleolytic cleavage in either 5'- to 3'- or 3'- to 5'-direction to yield nucleoside 5'-phosphates.. Functionally, bidirectionally degrades single-stranded DNA into large acid-insoluble oligonucleotides, which are then degraded further into small acid-soluble oligonucleotides. The chain is Exodeoxyribonuclease 7 small subunit from Streptomyces coelicolor (strain ATCC BAA-471 / A3(2) / M145).